The chain runs to 556 residues: Urocanate hydratase (556 aa).

Residues 52-53 (GG), Q130, 176-178 (GMG), E196, R201, 242-243 (NA), 263-267 (QTSAH), 273-274 (YL), and Y322 each bind NAD(+). C410 is an active-site residue. G492 lines the NAD(+) pocket.

The protein belongs to the urocanase family. NAD(+) serves as cofactor.

The protein localises to the cytoplasm. The catalysed reaction is 4-imidazolone-5-propanoate = trans-urocanate + H2O. Its pathway is amino-acid degradation; L-histidine degradation into L-glutamate; N-formimidoyl-L-glutamate from L-histidine: step 2/3. In terms of biological role, catalyzes the conversion of urocanate to 4-imidazolone-5-propionate. The chain is Urocanate hydratase from Shewanella sediminis (strain HAW-EB3).